The primary structure comprises 326 residues: Pyruvate dehydrogenase E1 component subunit alpha (326 aa).

In terms of assembly, heterodimer of an alpha and a beta chain. Requires thiamine diphosphate as cofactor.

It catalyses the reaction N(6)-[(R)-lipoyl]-L-lysyl-[protein] + pyruvate + H(+) = N(6)-[(R)-S(8)-acetyldihydrolipoyl]-L-lysyl-[protein] + CO2. In terms of biological role, the pyruvate dehydrogenase complex catalyzes the overall conversion of pyruvate to acetyl-CoA and CO(2). It contains multiple copies of three enzymatic components: pyruvate dehydrogenase (E1), dihydrolipoamide acetyltransferase (E2) and lipoamide dehydrogenase (E3). The polypeptide is Pyruvate dehydrogenase E1 component subunit alpha (pdhA) (Rickettsia typhi (strain ATCC VR-144 / Wilmington)).